The primary structure comprises 152 residues: Superoxide dismutase [Cu-Zn] (152 aa).

Residues His-45, His-47, and His-62 each contribute to the Cu cation site. The disordered stretch occupies residues 61–87 (PHFNPAGKEHGAPEDENRHAGDLGNAT). 4 residues coordinate Zn(2+): His-62, His-70, His-79, and Asp-82. Positions 67-81 (GKEHGAPEDENRHAG) are enriched in basic and acidic residues. Cu cation is bound at residue His-119.

The protein belongs to the Cu-Zn superoxide dismutase family. Homodimer. Requires Cu cation as cofactor. It depends on Zn(2+) as a cofactor.

It localises to the cytoplasm. It catalyses the reaction 2 superoxide + 2 H(+) = H2O2 + O2. In terms of biological role, destroys radicals which are normally produced within the cells and which are toxic to biological systems. This is Superoxide dismutase [Cu-Zn] from Zingiber officinale (Ginger).